The chain runs to 338 residues: Malate dehydrogenase, mitochondrial (338 aa).

The transit peptide at 1–24 (MLSALARPASAALRRSFSTSAQNN) directs the protein to the mitochondrion. NAD(+) is bound by residues 31–37 (GASGGIG) and D57. The O-linked (GlcNAc) serine glycan is linked to S33. K78 and K91 each carry N6-acetyllysine; alternate. K78 and K91 each carry N6-succinyllysine; alternate. Substrate contacts are provided by R104 and R110. Residues N117 and 140 to 142 (IAN) each bind NAD(+). Residue N142 coordinates substrate. N6-acetyllysine is present on K165. R176 lines the substrate pocket. At K185 the chain carries N6-acetyllysine; alternate. An N6-succinyllysine; alternate modification is found at K185. Catalysis depends on H200, which acts as the Proton acceptor. At K203 the chain carries N6-succinyllysine. N6-acetyllysine; alternate occurs at positions 215 and 239. N6-succinyllysine; alternate is present on residues K215 and K239. At K239 the chain carries N6-malonyllysine; alternate. S246 is modified (phosphoserine). M251 is a binding site for NAD(+). N6-succinyllysine is present on K269. N6-acetyllysine; alternate occurs at positions 296, 301, 307, 314, and 324. Residues K296, K301, K307, K314, and K324 each carry the N6-succinyllysine; alternate modification. At K307 the chain carries N6-malonyllysine; alternate. The residue at position 326 (S326) is a Phosphoserine. N6-acetyllysine; alternate is present on residues K328, K329, and K335. K328 carries the N6-succinyllysine; alternate modification. The residue at position 329 (K329) is an N6-malonyllysine; alternate. K335 is modified (N6-succinyllysine; alternate).

Belongs to the LDH/MDH superfamily. MDH type 1 family. In terms of assembly, homodimer. Acetylation is enhanced by up to 67% after treatment either with trichostin A (TSA) or with nicotinamide (NAM) with the appearance of tri- and tetraacetylations. Glucose also increases acetylation by about 60%.

The protein localises to the mitochondrion matrix. The catalysed reaction is (S)-malate + NAD(+) = oxaloacetate + NADH + H(+). Its activity is regulated as follows. Enzyme activity is enhanced by acetylation. The polypeptide is Malate dehydrogenase, mitochondrial (MDH2) (Homo sapiens (Human)).